Here is a 44-residue protein sequence, read N- to C-terminus: Protein non-structural 7b (44 aa).

A helical membrane pass occupies residues 9 to 29 (FYLCFLAFLLFLVLIMLIIFW).

The protein resides in the host membrane. This chain is Protein non-structural 7b, found in Homo sapiens (Human).